The following is a 57-amino-acid chain: High-potential iron-sulfur protein (57 aa).

Residues Cys21, Cys24, Cys33, and Cys46 each coordinate [4Fe-4S] cluster.

The protein belongs to the high-potential iron-sulfur protein (HiPIP) family. Homodimer.

Its function is as follows. Specific class of high-redox-potential 4Fe-4S ferredoxins. Functions in anaerobic electron transport in most purple and in some other photosynthetic bacteria and in at least one genus (Paracoccus) of halophilic, denitrifying bacteria. In Rhodopila globiformis (Rhodopseudomonas globiformis), this protein is High-potential iron-sulfur protein (hip).